The primary structure comprises 512 residues: MENTNLRTKTLRDGTTAEELFSQDGLSFNDFIILPGFIDFDSSKVNVSGQFTKNILLHLPLVSSPMDTVTESSMARAMALMGGIGVIHNNCTVEQQARMVRSVKLYRNGFIMKPKSVSPDVPVSTIRNIKSEKGISGILVTEGGKYDGKLLGIVCTKDIDFVKDASAPVSQYMTRRENMTVERYPIKLEEAMDVLNRSRHGYLPVLNDKDEVVCLCSRRDAVRARDYPNSSLDRNGHLLCAAATSTREADKGRVAALSEAGIDVLVLDSSQGNTIYQVSFIRWVKKTYPHLEVVAGNVVTQDQAKNLIDAGADSLRIGMGSGSICITQEVLACGRPQATAIYKVARYAASRGVPCVADGGLRNVGDVCKALAVGANVAMLGSMIAGTSETPGEYFFKDGMRLKGYRGMGSIDAMLQGRESGKRYLSENETLQVAQGVAGAVLDKGSVLKLLAYIHKGLQQSAQDIGEVSFDAIREKVYEGQVLFNRRTLTAQSEGAVHSLHHYERKLFASKL.

CBS domains follow at residues phenylalanine 110–valine 169 and methionine 173–serine 231. NAD(+)-binding positions include aspartate 268 to serine 270 and glycine 318 to glycine 320. The K(+) site is built by glycine 320 and glycine 322. Position 323 (serine 323) interacts with IMP. K(+) is bound at residue cysteine 325. The active-site Thioimidate intermediate is the cysteine 325. Residues aspartate 358 to glycine 360, glycine 381 to serine 382, and tyrosine 405 to glycine 409 each bind IMP. Arginine 423 functions as the Proton acceptor in the catalytic mechanism. Residue glutamine 435 coordinates IMP. K(+) is bound by residues glutamate 494 and glycine 495. Positions serine 510–leucine 512 match the Microbody targeting signal motif.

This sequence belongs to the IMPDH/GMPR family. In terms of assembly, homotetramer. K(+) is required as a cofactor.

The protein localises to the glycosome. The enzyme catalyses IMP + NAD(+) + H2O = XMP + NADH + H(+). Its pathway is purine metabolism; XMP biosynthesis via de novo pathway; XMP from IMP: step 1/1. Its activity is regulated as follows. Mycophenolic acid (MPA) is a non-competitive inhibitor that prevents formation of the closed enzyme conformation by binding to the same site as the amobile flap. In contrast, mizoribine monophosphate (MZP) is a competitive inhibitor that induces the closed conformation. MPA is a potent inhibitor of mammalian IMPDHs but a poor inhibitor of the bacterial enzymes. MZP is a more potent inhibitor of bacterial IMPDH. Functionally, catalyzes the conversion of inosine 5'-phosphate (IMP) to xanthosine 5'-phosphate (XMP), the first committed and rate-limiting step in the de novo synthesis of guanine nucleotides, and therefore plays an important role in the regulation of cell growth. The protein is Inosine-5'-monophosphate dehydrogenase of Trypanosoma brucei brucei.